The following is a 56-amino-acid chain: Large ribosomal subunit protein bL32 (56 aa).

The protein belongs to the bacterial ribosomal protein bL32 family.

The protein is Large ribosomal subunit protein bL32 of Prochlorococcus marinus (strain MIT 9215).